A 280-amino-acid polypeptide reads, in one-letter code: Homeobox protein Hox-B1b (280 aa).

Positions 46–65 are disordered; the sequence is GRLAAPTSAPHQSPGLPLHH. Residues 170-175 carry the Antp-type hexapeptide motif; sequence TFDWMK. Residues 195–254 constitute a DNA-binding region (homeobox); it reads HNVIRTNFTTKQLTELEKEFHFNKYLTRARRVEVAASLELNETQVKIWFQNRRMKQKKRE. The segment at 249-280 is disordered; it reads KQKKREKLGGVLVHREKASGPESSPKAKESEP. Basic and acidic residues predominate over residues 261–280; the sequence is VHREKASGPESSPKAKESEP.

It belongs to the Antp homeobox family. Labial subfamily.

The protein resides in the nucleus. In terms of biological role, sequence-specific transcription factor which is part of a developmental regulatory system that provides cells with specific positional identities on the anterior-posterior axis. The protein is Homeobox protein Hox-B1b (hoxb1b) of Takifugu rubripes (Japanese pufferfish).